The primary structure comprises 193 residues: dCTP deaminase (193 aa).

DCTP contacts are provided by residues 110–115 (RSSLAR), Asp-128, 136–138 (VLE), Tyr-171, Lys-178, and Gln-182. The active-site Proton donor/acceptor is Glu-138.

It belongs to the dCTP deaminase family. Homotrimer.

The catalysed reaction is dCTP + H2O + H(+) = dUTP + NH4(+). The protein operates within pyrimidine metabolism; dUMP biosynthesis; dUMP from dCTP (dUTP route): step 1/2. Catalyzes the deamination of dCTP to dUTP. The polypeptide is dCTP deaminase (Tolumonas auensis (strain DSM 9187 / NBRC 110442 / TA 4)).